A 121-amino-acid polypeptide reads, in one-letter code: Ribosome-binding factor A (121 aa).

It belongs to the RbfA family. Monomer. Binds 30S ribosomal subunits, but not 50S ribosomal subunits or 70S ribosomes.

The protein localises to the cytoplasm. One of several proteins that assist in the late maturation steps of the functional core of the 30S ribosomal subunit. Associates with free 30S ribosomal subunits (but not with 30S subunits that are part of 70S ribosomes or polysomes). Required for efficient processing of 16S rRNA. May interact with the 5'-terminal helix region of 16S rRNA. The chain is Ribosome-binding factor A from Clostridium kluyveri (strain NBRC 12016).